An 89-amino-acid polypeptide reads, in one-letter code: Ubiquinol-cytochrome-c reductase complex assembly factor 3 (89 aa).

At 1–7 (MEVARKA) the chain is on the mitochondrial matrix side. A helical membrane pass occupies residues 8 to 28 (LVAVAVLGGGAGVGSILFALV). A mediates lipid-binding region spans residues 23–80 (ILFALVTPGELQKQSMLQEMPERDSRRRDEAVRTTELVMATLKDAAATKENVAWRRNW). Over 29 to 89 (TPGELQKQSM…WTVSGDGRSA (61 aa)) the chain is Mitochondrial intermembrane.

The protein belongs to the UQCC3 family. Associates with the ubiquinol-cytochrome c reductase complex (mitochondrial respiratory chain complex III(CIII) or cytochrome b-c1 complex). Interacts with UQCC1. Forms a complex, named COMC, composed of UQCC1, UQCC2; UQCC3 and UQCC4; mediates MT-CYB hemylation and association with the first nuclear-encoded complex III subunit UQCRQ. Post-translationally, probably cleaved by OMA1 under mitochondrial stress conditions.

Its subcellular location is the mitochondrion inner membrane. In terms of biological role, required for the assembly of the ubiquinol-cytochrome c reductase complex (mitochondrial respiratory chain complex III or cytochrome b-c1 complex), mediating cytochrome b recruitment and probably stabilization within the complex. Thereby, plays an important role in ATP production by mitochondria. Cardiolipin-binding protein, it may also control the cardiolipin composition of mitochondria membranes and their morphology. This is Ubiquinol-cytochrome-c reductase complex assembly factor 3 from Mus musculus (Mouse).